The primary structure comprises 631 residues: tRNA uridine 5-carboxymethylaminomethyl modification enzyme MnmG (631 aa).

14–19 (GGGHAG) contributes to the FAD binding site. 274-288 (GPRYCPSIEDKIHRF) is an NAD(+) binding site.

This sequence belongs to the MnmG family. As to quaternary structure, homodimer. Heterotetramer of two MnmE and two MnmG subunits. FAD serves as cofactor.

It localises to the cytoplasm. Its function is as follows. NAD-binding protein involved in the addition of a carboxymethylaminomethyl (cmnm) group at the wobble position (U34) of certain tRNAs, forming tRNA-cmnm(5)s(2)U34. The polypeptide is tRNA uridine 5-carboxymethylaminomethyl modification enzyme MnmG (Pseudomonas paraeruginosa (strain DSM 24068 / PA7) (Pseudomonas aeruginosa (strain PA7))).